A 403-amino-acid polypeptide reads, in one-letter code: Phosphopentomutase (403 aa).

Residues Asp13, Asp298, His303, Asp339, His340, and His351 each contribute to the Mn(2+) site.

Belongs to the phosphopentomutase family. Mn(2+) is required as a cofactor.

It is found in the cytoplasm. The catalysed reaction is 2-deoxy-alpha-D-ribose 1-phosphate = 2-deoxy-D-ribose 5-phosphate. It catalyses the reaction alpha-D-ribose 1-phosphate = D-ribose 5-phosphate. The protein operates within carbohydrate degradation; 2-deoxy-D-ribose 1-phosphate degradation; D-glyceraldehyde 3-phosphate and acetaldehyde from 2-deoxy-alpha-D-ribose 1-phosphate: step 1/2. In terms of biological role, isomerase that catalyzes the conversion of deoxy-ribose 1-phosphate (dRib-1-P) and ribose 1-phosphate (Rib-1-P) to deoxy-ribose 5-phosphate (dRib-5-P) and ribose 5-phosphate (Rib-5-P), respectively. The protein is Phosphopentomutase of Streptococcus pyogenes serotype M18 (strain MGAS8232).